The primary structure comprises 169 residues: Small ribosomal subunit protein uS9 (169 aa).

Disordered regions lie at residues 1–29 and 128–169; these read MVEP…TETP and MDPE…YSKR. A compositionally biased stretch (acidic residues) spans 9 to 21; sequence DVQEYDENSEEYP. The segment covering 150–169 has biased composition (basic residues); it reads VERKKAGLKKARKAPQYSKR.

This sequence belongs to the universal ribosomal protein uS9 family.

This chain is Small ribosomal subunit protein uS9, found in Thermobifida fusca (strain YX).